A 240-amino-acid polypeptide reads, in one-letter code: Phosphoribosylaminoimidazole-succinocarboxamide synthase (240 aa).

This sequence belongs to the SAICAR synthetase family.

It catalyses the reaction 5-amino-1-(5-phospho-D-ribosyl)imidazole-4-carboxylate + L-aspartate + ATP = (2S)-2-[5-amino-1-(5-phospho-beta-D-ribosyl)imidazole-4-carboxamido]succinate + ADP + phosphate + 2 H(+). Its pathway is purine metabolism; IMP biosynthesis via de novo pathway; 5-amino-1-(5-phospho-D-ribosyl)imidazole-4-carboxamide from 5-amino-1-(5-phospho-D-ribosyl)imidazole-4-carboxylate: step 1/2. This is Phosphoribosylaminoimidazole-succinocarboxamide synthase from Anoxybacillus flavithermus (strain DSM 21510 / WK1).